Reading from the N-terminus, the 162-residue chain is uncharacterized protein (162 aa).

Residues 65–76 are compositionally biased toward basic and acidic residues; sequence EEKPLEVAQDRN. The disordered stretch occupies residues 65 to 93; sequence EEKPLEVAQDRNNKRKAPSHLEPAHDFIS.

This is an uncharacterized protein from Bacillus subtilis (strain 168).